We begin with the raw amino-acid sequence, 159 residues long: NADH-quinone oxidoreductase subunit B (159 aa).

[4Fe-4S] cluster-binding residues include cysteine 37, cysteine 38, cysteine 102, and cysteine 132.

It belongs to the complex I 20 kDa subunit family. In terms of assembly, NDH-1 is composed of 14 different subunits. Subunits NuoB, C, D, E, F, and G constitute the peripheral sector of the complex. [4Fe-4S] cluster is required as a cofactor.

The protein resides in the cell inner membrane. The catalysed reaction is a quinone + NADH + 5 H(+)(in) = a quinol + NAD(+) + 4 H(+)(out). NDH-1 shuttles electrons from NADH, via FMN and iron-sulfur (Fe-S) centers, to quinones in the respiratory chain. The immediate electron acceptor for the enzyme in this species is believed to be ubiquinone. Couples the redox reaction to proton translocation (for every two electrons transferred, four hydrogen ions are translocated across the cytoplasmic membrane), and thus conserves the redox energy in a proton gradient. The polypeptide is NADH-quinone oxidoreductase subunit B (Variovorax paradoxus (strain S110)).